The following is a 434-amino-acid chain: Glycylpeptide N-tetradecanoyltransferase 1 (434 aa).

The interval 1 to 24 is disordered; it reads MADNNSPPGSVEQKADQIVEANPL. A2 carries the N-acetylalanine modification. Residues 48-51, 184-186, and 192-196 contribute to the tetradecanoyl-CoA site; these read HKFW, LCV, and SKRLA. The active-site Proton acceptor; via carboxylate is L434.

The protein belongs to the NMT family. As to expression, expressed ubiquitously, with higher levels in young tissues (at protein level).

The protein resides in the cytoplasm. It catalyses the reaction N-terminal glycyl-[protein] + tetradecanoyl-CoA = N-tetradecanoylglycyl-[protein] + CoA + H(+). Adds a myristoyl group to the N-terminal glycine residue of certain cellular proteins. Can also use decanoyl-CoA and lauroyl-CoA as substrates. The sequence is that of Glycylpeptide N-tetradecanoyltransferase 1 (NMT1) from Arabidopsis thaliana (Mouse-ear cress).